The sequence spans 1067 residues: Kinesin-like protein KIF11-A (1067 aa).

The Kinesin motor domain maps to 18–359 (NIQVVVRCRP…LDYASRAKNI (342 aa)). Position 105 to 112 (105 to 112 (GQTGTGKT)) interacts with ATP. Coiled coils occupy residues 365-480 (VNQK…QEAF), 692-721 (DSSS…HSEG), and 882-915 (QAQE…QVQS). Threonine 937 is subject to Phosphothreonine; by CDK1. Serine 1046 is modified (phosphoserine; by NEK6).

Belongs to the TRAFAC class myosin-kinesin ATPase superfamily. Kinesin family. BimC subfamily. Heterotetramer of two heavy and two light chains. Interacts with aurka. Phosphorylation of Thr-937 during mitosis controls the association of this protein with the spindle apparatus. Post-translationally, a subset of this protein primarily localized at the spindle pole is phosphorylated by NEK6 during mitosis. In terms of processing, phosphorylated on a serine residue by aurka. In terms of tissue distribution, highly expressed in unfertilized eggs, especially in the germinal vesicle and in the radial yolk-poor channels. Also present in testis.

The protein localises to the cytoplasm. Its subcellular location is the cytoskeleton. It localises to the spindle pole. Its function is as follows. Plus end-directed motor protein required for establishing a bipolar spindle. Associates with both interphase and spindle microtubules. May be involved in nuclear divisions taking place during the development of unfertilized eggs. Required in non-mitotic cells for transport of secretory proteins from the Golgi complex to the cell surface. The chain is Kinesin-like protein KIF11-A (kif11-a) from Xenopus laevis (African clawed frog).